Here is a 248-residue protein sequence, read N- to C-terminus: Triosephosphate isomerase (248 aa).

Substrate is bound at residue 9 to 11 (NWK). The active-site Electrophile is His-94. The Proton acceptor role is filled by Glu-166. Substrate contacts are provided by residues Gly-172, Ser-212, and 233–234 (GG).

The protein belongs to the triosephosphate isomerase family. Homodimer.

It localises to the cytoplasm. It carries out the reaction D-glyceraldehyde 3-phosphate = dihydroxyacetone phosphate. The protein operates within carbohydrate biosynthesis; gluconeogenesis. Its pathway is carbohydrate degradation; glycolysis; D-glyceraldehyde 3-phosphate from glycerone phosphate: step 1/1. Its function is as follows. Involved in the gluconeogenesis. Catalyzes stereospecifically the conversion of dihydroxyacetone phosphate (DHAP) to D-glyceraldehyde-3-phosphate (G3P). The polypeptide is Triosephosphate isomerase (Clostridium botulinum (strain Eklund 17B / Type B)).